Here is a 404-residue protein sequence, read N- to C-terminus: S-adenosylmethionine synthase (404 aa).

His18 is an ATP binding site. Asp20 lines the Mg(2+) pocket. Glu46 lines the K(+) pocket. L-methionine is bound by residues Glu59 and Gln102. Positions 102–112 (QSPEIAQGVDH) are flexible loop. Residues 178 to 180 (DGK), 249 to 250 (KF), Asp258, 264 to 265 (RK), Ala281, and Lys285 contribute to the ATP site. Position 258 (Asp258) interacts with L-methionine. Residue Lys289 participates in L-methionine binding.

The protein belongs to the AdoMet synthase family. In terms of assembly, homotetramer; dimer of dimers. Requires Mg(2+) as cofactor. The cofactor is K(+).

It is found in the cytoplasm. It catalyses the reaction L-methionine + ATP + H2O = S-adenosyl-L-methionine + phosphate + diphosphate. It participates in amino-acid biosynthesis; S-adenosyl-L-methionine biosynthesis; S-adenosyl-L-methionine from L-methionine: step 1/1. Its function is as follows. Catalyzes the formation of S-adenosylmethionine (AdoMet) from methionine and ATP. The overall synthetic reaction is composed of two sequential steps, AdoMet formation and the subsequent tripolyphosphate hydrolysis which occurs prior to release of AdoMet from the enzyme. The polypeptide is S-adenosylmethionine synthase (Rhodococcus jostii (strain RHA1)).